The sequence spans 160 residues: Glucan endo-1,3-beta-glucosidase, acidic isoform PR-O (160 aa).

Residue glutamate 81 is the Nucleophile of the active site.

This sequence belongs to the glycosyl hydrolase 17 family. Post-translationally, the N-terminus is blocked.

The protein localises to the secreted. Its subcellular location is the extracellular space. It catalyses the reaction Hydrolysis of (1-&gt;3)-beta-D-glucosidic linkages in (1-&gt;3)-beta-D-glucans.. In terms of biological role, implicated in the defense of plants against pathogens. The chain is Glucan endo-1,3-beta-glucosidase, acidic isoform PR-O (PR0) from Nicotiana tabacum (Common tobacco).